We begin with the raw amino-acid sequence, 290 residues long: Ribosomal RNA small subunit methyltransferase A (290 aa).

S-adenosyl-L-methionine is bound by residues asparagine 27, leucine 29, glycine 54, glutamate 75, aspartate 100, and asparagine 125.

This sequence belongs to the class I-like SAM-binding methyltransferase superfamily. rRNA adenine N(6)-methyltransferase family. RsmA subfamily.

The protein resides in the cytoplasm. The enzyme catalyses adenosine(1518)/adenosine(1519) in 16S rRNA + 4 S-adenosyl-L-methionine = N(6)-dimethyladenosine(1518)/N(6)-dimethyladenosine(1519) in 16S rRNA + 4 S-adenosyl-L-homocysteine + 4 H(+). Functionally, specifically dimethylates two adjacent adenosines (A1518 and A1519) in the loop of a conserved hairpin near the 3'-end of 16S rRNA in the 30S particle. May play a critical role in biogenesis of 30S subunits. The protein is Ribosomal RNA small subunit methyltransferase A of Streptococcus pneumoniae (strain ATCC 700669 / Spain 23F-1).